A 100-amino-acid chain; its full sequence is MASVNIKPLEDKILVQANEAETTTASGLVIPDTAKEKPQEGTVVAVGPGRWDEDGEKRIPLDVSEGDVVIYSKYGGTEIKYNGEEYLILSARDVLAVVSK.

This sequence belongs to the GroES chaperonin family. As to quaternary structure, heptamer of 7 subunits arranged in a ring. Interacts with the chaperonin GroEL.

It is found in the cytoplasm. Functionally, together with the chaperonin GroEL, plays an essential role in assisting protein folding. The GroEL-GroES system forms a nano-cage that allows encapsulation of the non-native substrate proteins and provides a physical environment optimized to promote and accelerate protein folding. GroES binds to the apical surface of the GroEL ring, thereby capping the opening of the GroEL channel. This Mycolicibacterium vanbaalenii (strain DSM 7251 / JCM 13017 / BCRC 16820 / KCTC 9966 / NRRL B-24157 / PYR-1) (Mycobacterium vanbaalenii) protein is Co-chaperonin GroES.